The chain runs to 197 residues: Large ribosomal subunit protein bL25 (197 aa).

Belongs to the bacterial ribosomal protein bL25 family. CTC subfamily. In terms of assembly, part of the 50S ribosomal subunit; part of the 5S rRNA/L5/L18/L25 subcomplex. Contacts the 5S rRNA. Binds to the 5S rRNA independently of L5 and L18.

This is one of the proteins that binds to the 5S RNA in the ribosome where it forms part of the central protuberance. The sequence is that of Large ribosomal subunit protein bL25 from Hydrogenobaculum sp. (strain Y04AAS1).